The primary structure comprises 1001 residues: Ankyrin repeat domain-containing protein 35 (1001 aa).

ANK repeat units follow at residues 53-82, 86-115, 119-148, 152-181, 185-214, and 218-247; these read NGQS…DINS, DGST…NEDA, ENRS…FLDV, DGRT…RVNV, NDKS…DAGA, and TGHD…RRRR. 3 disordered regions span residues 256-296, 352-482, and 559-601; these read PDLA…PCSE, PRAS…VAEP, and PEVP…ALGG. The span at 281–295 shows a compositional bias: acidic residues; it reads PEEEQEEKEDEDPCS. The stretch at 295–344 forms a coiled coil; the sequence is SEEWRWKYEEERRKVVRLEQELVQKTEECKTQAAAYLDLENQIREQAQEL. Residues 402-422 are compositionally biased toward basic and acidic residues; sequence KKAEDSAPGKIQYEVHGRSQP. Residues 423–434 are compositionally biased toward low complexity; sequence EEQGPPQSPASE. Residues 440–450 are compositionally biased toward polar residues; it reads TGQQLTTNGAQ. The span at 579 to 588 shows a compositional bias: basic and acidic residues; sequence KQDEEKEKRV. 3 coiled-coil regions span residues 610–696, 733–810, and 851–968; these read KGQL…LLAS, ISTL…IGKL, and QELK…HEEI. Residues 879 to 902 form a disordered region; that stretch reads RRSGDLAAQAAEQERQASEMRGRS. The segment covering 890–902 has biased composition (basic and acidic residues); the sequence is EQERQASEMRGRS.

This Homo sapiens (Human) protein is Ankyrin repeat domain-containing protein 35 (ANKRD35).